The following is a 156-amino-acid chain: Small ribosomal subunit protein uS7 (156 aa).

It belongs to the universal ribosomal protein uS7 family. Part of the 30S ribosomal subunit. Contacts proteins S9 and S11.

In terms of biological role, one of the primary rRNA binding proteins, it binds directly to 16S rRNA where it nucleates assembly of the head domain of the 30S subunit. Is located at the subunit interface close to the decoding center, probably blocks exit of the E-site tRNA. This is Small ribosomal subunit protein uS7 from Coprothermobacter proteolyticus (strain ATCC 35245 / DSM 5265 / OCM 4 / BT).